The chain runs to 196 residues: uncharacterized protein (196 aa).

Pro residues predominate over residues 1–10; that stretch reads MPGMVPPHVP. Disordered regions lie at residues 1–118 and 176–196; these read MPGM…EGSG and TEQA…SAPG. Residues 25–45 show a composition bias toward low complexity; the sequence is PVAPQVPSPGGAPGQGPYPYS. Positions 54-69 are enriched in polar residues; that stretch reads LDTSGKNLTEQNSYSN.

This is an uncharacterized protein from Homo sapiens (Human).